A 209-amino-acid polypeptide reads, in one-letter code: MIVTIDGVAASGKSSVASGVARALGVPYVSSGLLYRAATLLALEADLPLDDPTTLLPQLHAHPLRLEALPEGNRVWAGERELTAELHSTRVDQGVSAVAALPEVRAWVDAQLRALPAPFVAEGRDMGTHVFPHADAKFYLTASPRVRAERRAQERPEDVPTIEAALIERDRRDRLQSAPAPDAHVIDTGPLALEDVIGVILAALPARSA.

Gly-7–Ser-15 lines the ATP pocket.

Belongs to the cytidylate kinase family. Type 1 subfamily.

It is found in the cytoplasm. It catalyses the reaction CMP + ATP = CDP + ADP. It carries out the reaction dCMP + ATP = dCDP + ADP. The chain is Cytidylate kinase from Deinococcus geothermalis (strain DSM 11300 / CIP 105573 / AG-3a).